The chain runs to 143 residues: Antitumor antibiotic C-1027 apoprotein (143 aa).

Residues 1 to 33 (MSLRHMSRRASRFGVVAVASIGLAAAAQSVAFA) form the signal peptide. 2 cysteine pairs are disulfide-bonded: Cys69/Cys78 and Cys119/Cys124.

It belongs to the neocarzinostatin family.

In terms of biological role, binds non-covalently to a chromophore which is the cytotoxic and mutagenic component of the antibiotic. The chromophore binds to DNA as a weak intercalator and causes single- and double-strand breaks. The polypeptide is Antitumor antibiotic C-1027 apoprotein (cagA) (Streptomyces globisporus).